The primary structure comprises 1101 residues: Helicase POLQ-like (1101 aa).

A disordered region spans residues 212–261 (DLGDHSMKERDWKSSSHNTVNEELPHNCIEQPQQNDESSSKVRTSSDMNR). The segment covering 213–225 (LGDHSMKERDWKS) has biased composition (basic and acidic residues). The segment covering 241 to 258 (EQPQQNDESSSKVRTSSD) has biased composition (polar residues). The 173-residue stretch at 346 to 518 (LNSVQERKNL…FLQAEYYTSQ (173 aa)) folds into the Helicase ATP-binding domain. 359–366 (LPTSGGKT) is a binding site for ATP. Positions 463–466 (DELH) match the DEAH box motif. A Helicase C-terminal domain is found at 566-758 (HLVALVTEVI…EFTKGIQTLF (193 aa)).

The protein belongs to the helicase family. SKI2 subfamily. As to quaternary structure, homodimer. Interacts with POLN. Interacts with RAD51B and RAD51C; promoting association with the BCDX2 complex. Interacts with the replication protein A (RPA/RP-A) complex. Interacts with RAD51; stimulating HELQ DNA helicase activity and ability to unwing DNA.

The protein localises to the nucleus. It localises to the chromosome. The catalysed reaction is Couples ATP hydrolysis with the unwinding of duplex DNA by translocating in the 3'-5' direction.. The enzyme catalyses ATP + H2O = ADP + phosphate + H(+). ATPase activity is strongly stimulated by single-stranded DNA. Presence of ATP and Mg cofactor are required for helicase activity allowing to unwind duplex oligonucleotides up to 60-70-mer. This helicase activity is stimulated by replication protein A (RPA/RP-A) complex that binds to unwound regions and inhibits re-annealing. Its function is as follows. Single-stranded 3'-5' DNA helicase that plays a key role in homology-driven double-strand break (DSB) repair. Involved in different DSB repair mechanisms that are guided by annealing of extensive stretches of complementary bases at break ends, such as microhomology-mediated end-joining (MMEJ), single-strand annealing (SSA) or synthesis-dependent strand annealing (SDSA). Possesses both DNA unwinding and annealing activities. Forms a complex with RAD51, stimulating HELQ DNA helicase activity and ability to unwing DNA. Efficiently unwinds substrates containing 3' overhangs or a D-loop. In contrast, interaction with the replication protein A (RPA/RP-A) complex inhibits DNA unwinding by HELQ but strongly stimulates DNA strand annealing. Triggers displacement of RPA from single-stranded DNA to facilitate annealing of complementary sequences. This Homo sapiens (Human) protein is Helicase POLQ-like.